The sequence spans 474 residues: Trigger factor (474 aa).

One can recognise a PPIase FKBP-type domain in the interval 171–258 (GDVAVIDFQG…LKELKTRDLP (88 aa)). The disordered stretch occupies residues 441–474 (TEVDAASATVETTATETAEEAPEAPKAKKGKKKA). A compositionally biased stretch (low complexity) spans 444 to 456 (DAASATVETTATE).

This sequence belongs to the FKBP-type PPIase family. Tig subfamily.

The protein localises to the cytoplasm. The enzyme catalyses [protein]-peptidylproline (omega=180) = [protein]-peptidylproline (omega=0). Its function is as follows. Involved in protein export. Acts as a chaperone by maintaining the newly synthesized protein in an open conformation. Functions as a peptidyl-prolyl cis-trans isomerase. This chain is Trigger factor, found in Synechococcus elongatus (strain ATCC 33912 / PCC 7942 / FACHB-805) (Anacystis nidulans R2).